Consider the following 288-residue polypeptide: UPF0761 membrane protein HSM_1104 (288 aa).

Transmembrane regions (helical) follow at residues 36 to 56, 92 to 112, 127 to 147, 176 to 196, 200 to 220, and 240 to 260; these read TLAL…FPVF, QMSA…IHSI, PAIF…IVIA, LLSL…YMVV, KVSI…FTLG, and AMAT…AVLL.

Belongs to the UPF0761 family.

Its subcellular location is the cell inner membrane. The polypeptide is UPF0761 membrane protein HSM_1104 (Histophilus somni (strain 2336) (Haemophilus somnus)).